The following is a 130-amino-acid chain: L-ectoine synthase (130 aa).

The protein belongs to the ectoine synthase family.

It carries out the reaction (2S)-4-acetamido-2-aminobutanoate = L-ectoine + H2O. Its pathway is amine and polyamine biosynthesis; ectoine biosynthesis; L-ectoine from L-aspartate 4-semialdehyde: step 3/3. Its function is as follows. Catalyzes the circularization of gamma-N-acetyl-alpha,gamma-diaminobutyric acid (ADABA) to ectoine (1,4,5,6-tetrahydro-2-methyl-4-pyrimidine carboxylic acid), which is an excellent osmoprotectant. The protein is L-ectoine synthase of Mycolicibacterium vanbaalenii (strain DSM 7251 / JCM 13017 / BCRC 16820 / KCTC 9966 / NRRL B-24157 / PYR-1) (Mycobacterium vanbaalenii).